A 281-amino-acid chain; its full sequence is uncharacterized protein (281 aa).

A run of 4 helical transmembrane segments spans residues 8-28 (ALPV…FIWS), 97-117 (LAVA…RGYG), 147-167 (PARI…GLAV), and 210-230 (IASV…IVPA).

It to S.pombe bem46 and yeast YNL320w.

Its subcellular location is the cell membrane. This is an uncharacterized protein from Mycobacterium tuberculosis (strain ATCC 25618 / H37Rv).